A 430-amino-acid chain; its full sequence is MSQTPPPKDGKNPEAMEVEDAIDEEILKMSTEDLKSRTHLLDNEIRIMRSEVQRINHSATTLKERIKENTERIKVNKTLPYLVSNVVELLDLEDNTEEEGANVDLDAQKTKCAVIKTSTRATYFLPVVGLVDPDELKPGDLVGVNKDSYLILEKLPAEYDSRVKAMEVDERPTEQYSDIGGCDKQIQELIEAVVLPMTHKDRFVNLGIHPPKGVLMYGPPGTGKTMMARAVAAQTKSTFLKLAGPQLVQMFIGDGAKLVRDAFALAKEKAPAIIFIDELDAIGTKRFDSEKAGDREVQRTMLELLNQLDGFQPNDDIKVIAATNRIDVLDPALLRSGRLDRKIELPHPNEDARARIMQIHSRKMNVNKDVNFEELARCTDDFNGAQCKAVCVEAGMIALRRDATEILHEDFMDAILEVQAKKKASLNYYA.

218–225 (GPPGTGKT) lines the ATP pocket.

It belongs to the AAA ATPase family. Component of the 19S proteasome regulatory particle complex. The 26S proteasome consists of a 20S core particle (CP) and two 19S regulatory subunits (RP). The regulatory particle is made of a lid composed of 9 subunits, a base containing 6 ATPases including the PSMC3 homolog rpt-5 and few additional components.

Its subcellular location is the cytoplasm. It localises to the nucleus. Functionally, component of the 26S proteasome, a multiprotein complex involved in the ATP-dependent degradation of ubiquitinated proteins. This complex plays a key role in the maintenance of protein homeostasis by removing misfolded or damaged proteins, which could impair cellular functions, and by removing proteins whose functions are no longer required. Therefore, the proteasome participates in numerous cellular processes, including cell cycle progression, apoptosis, or DNA damage repair. Belongs to the heterohexameric ring of AAA (ATPases associated with diverse cellular activities) proteins that unfolds ubiquitinated target proteins that are concurrently translocated into a proteolytic chamber and degraded into peptides. This is 26S protease regulatory subunit 6A from Caenorhabditis elegans.